Consider the following 310-residue polypeptide: Thioredoxin reductase (310 aa).

34–41 (NGMQPGGQ) provides a ligand contact to FAD. The cysteines at positions 135 and 138 are disulfide-linked. 281–290 (DVQDKIYRQA) contributes to the FAD binding site.

Belongs to the class-II pyridine nucleotide-disulfide oxidoreductase family. In terms of assembly, homodimer. The cofactor is FAD.

Its subcellular location is the cytoplasm. The enzyme catalyses [thioredoxin]-dithiol + NADP(+) = [thioredoxin]-disulfide + NADPH + H(+). In Rickettsia prowazekii (strain Madrid E), this protein is Thioredoxin reductase (trxB).